Consider the following 1463-residue polypeptide: Nucleoporin NUP152 (1463 aa).

Disordered stretches follow at residues 1 to 199 (MDPP…GRPG), 339 to 568 (GIPD…ELPA), and 609 to 1064 (TTKK…FGNT). Polar residues-rich tracts occupy residues 32–42 (STNSNSVTANA), 81–92 (GPSSKLSQSVSA), 144–155 (TSSKATSFSGAP), 175–191 (TTYT…QSFP), 367–378 (PSSSTFTHTASP), and 416–472 (PAKT…SSNI). The segment covering 481-498 (KDEDNESDTGSEAEAEDE) has biased composition (acidic residues). 2 stretches are compositionally biased toward low complexity: residues 511-523 (GASS…GGES) and 616-630 (AAAP…TPTT). 3 stretches are compositionally biased toward polar residues: residues 651 to 664 (IFGS…TSIP), 673 to 689 (PATS…TSAA), and 720 to 746 (TTES…TQPQ). The FXFG 1 repeat unit spans residues 729–732 (FQFG). Low complexity predominate over residues 753 to 768 (KPPSTETPTEKPATTS). The segment covering 777–789 (PATTSSLFGSATT) has biased composition (polar residues). Over residues 803–813 (TTTPADKPTTT) the composition is skewed to low complexity. The span at 814–828 (NLFGSTSTQATSGSD) shows a compositional bias: polar residues. Residues 835–838 (FAFG) form an FXFG 2 repeat. Residues 840-863 (TTESKPTTSLFGSTTPAPATSTEN) show a composition bias toward polar residues. Low complexity predominate over residues 870–881 (ATTTSATPATNT). Composition is skewed to polar residues over residues 900 to 923 (GSST…STEQ), 940 to 961 (GSTS…TMTE), 968 to 987 (SIST…STTE), 998 to 1029 (STEQ…STEQ), and 1037 to 1055 (PAST…TTEN). The FXFG 3 repeat unit spans residues 910-913 (FQFG). FXFG repeat units lie at residues 1074-1077 (FNFG), 1127-1130 (FNFG), 1141-1144 (FTFG), and 1152-1155 (FTFG). Disordered regions lie at residues 1155–1174 (GASS…PIFS) and 1179–1217 (QPSS…KHVP). The span at 1156-1170 (ASSDSSNASNNASSA) shows a compositional bias: low complexity. One copy of the FXFG 8 repeat lies at 1173-1176 (FSFG). A compositionally biased stretch (polar residues) spans 1179–1199 (QPSSTPLFGQNNPPAASNIFA). The FXFG 9 repeat unit spans residues 1236–1239 (FTFG). The segment covering 1240–1271 (GASSLATTPAASTPEPSAANAAAAGEDQGASA) has biased composition (low complexity). Disordered regions lie at residues 1240 to 1335 (GASS…PWKV) and 1416 to 1463 (AALE…DEKK). Residues 1289–1427 (GEEDESVVHE…LEEHKKANEK (139 aa)) enclose the RanBD1 domain. A compositionally biased stretch (basic and acidic residues) spans 1418 to 1463 (LEEHKKANEKKDGEKNEESEKKDEKQEEKKNEEKKDEKEEKKDEKK).

In terms of assembly, the nuclear pore complex (NPC) constitutes the exclusive means of nucleocytoplasmic transport. NPCs allow the passive diffusion of ions and small molecules and the active, nuclear transport receptor-mediated bidirectional transport of macromolecules such as proteins, RNAs, ribonucleoparticles (RNPs), and ribosomal subunits across the nuclear envelope. The 55-60 MDa NPC is composed of at least 28 different subunits: AMO1, ELYS, GLE1, GLE2, MLP1, NDC1, NIC96, NSP1, NUP133, NUP145, NUP152, NUP159, NUP170, NUP188, NUP192, NUP37, NUP49, NUP53, NUP56, NUP57, NUP82, NUP84, NUP85, POM152, POM33, POM34, SEC13 and SEH1. Due to its 8-fold rotational symmetry, all subunits are present with 8 copies or multiples thereof.

It is found in the nucleus. The protein resides in the nuclear pore complex. Its subcellular location is the nucleus membrane. In terms of biological role, functions as a component of the nuclear pore complex (NPC). NPC components, collectively referred to as nucleoporins (NUPs), can play the role of both NPC structural components and of docking or interaction partners for transiently associated nuclear transport factors. Active directional transport is assured by both, a Phe-Gly (FG) repeat affinity gradient for these transport factors across the NPC and a transport cofactor concentration gradient across the nuclear envelope (GSP1 and GSP2 GTPases associated predominantly with GTP in the nucleus, with GDP in the cytoplasm). The chain is Nucleoporin NUP152 (NUP152) from Chaetomium thermophilum (strain DSM 1495 / CBS 144.50 / IMI 039719) (Thermochaetoides thermophila).